Reading from the N-terminus, the 444-residue chain is Glutamyl-tRNA reductase (444 aa).

Substrate-binding positions include 49-52, Ser-109, 114-116, and Gln-120; these read TCNR and ETQ. Cys-50 acts as the Nucleophile in catalysis. Position 189–194 (189–194) interacts with NADP(+); it reads GAGKMG.

It belongs to the glutamyl-tRNA reductase family. Homodimer.

The enzyme catalyses (S)-4-amino-5-oxopentanoate + tRNA(Glu) + NADP(+) = L-glutamyl-tRNA(Glu) + NADPH + H(+). It participates in porphyrin-containing compound metabolism; protoporphyrin-IX biosynthesis; 5-aminolevulinate from L-glutamyl-tRNA(Glu): step 1/2. In terms of biological role, catalyzes the NADPH-dependent reduction of glutamyl-tRNA(Glu) to glutamate 1-semialdehyde (GSA). The protein is Glutamyl-tRNA reductase of Bacillus anthracis (strain A0248).